Consider the following 101-residue polypeptide: NAD(P)H-quinone oxidoreductase subunit 4L, chloroplastic (101 aa).

3 consecutive transmembrane segments (helical) span residues 2–22, 32–52, and 61–81; these read ILEH…YGLI, MCLE…SDFF, and IFCI…LAIV.

It belongs to the complex I subunit 4L family. As to quaternary structure, NDH is composed of at least 16 different subunits, 5 of which are encoded in the nucleus.

Its subcellular location is the plastid. The protein localises to the chloroplast thylakoid membrane. The enzyme catalyses a plastoquinone + NADH + (n+1) H(+)(in) = a plastoquinol + NAD(+) + n H(+)(out). It carries out the reaction a plastoquinone + NADPH + (n+1) H(+)(in) = a plastoquinol + NADP(+) + n H(+)(out). In terms of biological role, NDH shuttles electrons from NAD(P)H:plastoquinone, via FMN and iron-sulfur (Fe-S) centers, to quinones in the photosynthetic chain and possibly in a chloroplast respiratory chain. The immediate electron acceptor for the enzyme in this species is believed to be plastoquinone. Couples the redox reaction to proton translocation, and thus conserves the redox energy in a proton gradient. The chain is NAD(P)H-quinone oxidoreductase subunit 4L, chloroplastic from Arabis hirsuta (Hairy rock-cress).